Consider the following 636-residue polypeptide: Probable potassium transport system protein Kup (636 aa).

The next 12 membrane-spanning stretches (helical) occupy residues 22–42 (LGLLVAAVGVVYGDIGTSPLY), 64–84 (ILSLILWSLLWVVSFKYVMFI), 115–135 (LMVICGLIGASLFYGDSMITP), 150–170 (FDGIDHWVVPISLVVLVALFL), 182–202 (LFGPIMVTWFVVLGALGVHGI), 220–240 (FFVVHPGMGVAILGAVVLALT), 261–281 (WFILVLPALVLNYFGQGALLL), 293–313 (LLAPSWALLPLVGLATMATVI), 351–371 (IYIGAVNWTLMVGVVLLVIGF), 383–403 (VAVTGTMLMTTILVSAVMLLL), 408–428 (PVLAVPLLMGFLFVDGLFFAA), and 433–453 (IVQGGAFPVLAGGVLFLLMST).

This sequence belongs to the HAK/KUP transporter (TC 2.A.72) family.

The protein resides in the cell inner membrane. It carries out the reaction K(+)(in) + H(+)(in) = K(+)(out) + H(+)(out). Transport of potassium into the cell. Likely operates as a K(+):H(+) symporter. In Pseudomonas putida (strain GB-1), this protein is Probable potassium transport system protein Kup.